Reading from the N-terminus, the 267-residue chain is Glutamate 5-kinase (267 aa).

K18 serves as a coordination point for ATP. Positions 58, 145, and 157 each coordinate substrate. Residues S177–D178 and T219–K225 each bind ATP.

Belongs to the glutamate 5-kinase family.

Its subcellular location is the cytoplasm. It catalyses the reaction L-glutamate + ATP = L-glutamyl 5-phosphate + ADP. It functions in the pathway amino-acid biosynthesis; L-proline biosynthesis; L-glutamate 5-semialdehyde from L-glutamate: step 1/2. Its function is as follows. Catalyzes the transfer of a phosphate group to glutamate to form L-glutamate 5-phosphate. The chain is Glutamate 5-kinase from Clostridium tetani (strain Massachusetts / E88).